The sequence spans 372 residues: tRNA-specific 2-thiouridylase MnmA (372 aa).

ATP-binding positions include Ala6–Ser13 and Leu32. Cys101 functions as the Nucleophile in the catalytic mechanism. Cys101 and Cys193 are disulfide-bonded. Gly125 lines the ATP pocket. The tract at residues Lys143–Gln145 is interaction with tRNA. Catalysis depends on Cys193, which acts as the Cysteine persulfide intermediate.

This sequence belongs to the MnmA/TRMU family.

The protein resides in the cytoplasm. It carries out the reaction S-sulfanyl-L-cysteinyl-[protein] + uridine(34) in tRNA + AH2 + ATP = 2-thiouridine(34) in tRNA + L-cysteinyl-[protein] + A + AMP + diphosphate + H(+). In terms of biological role, catalyzes the 2-thiolation of uridine at the wobble position (U34) of tRNA, leading to the formation of s(2)U34. The chain is tRNA-specific 2-thiouridylase MnmA from Corynebacterium kroppenstedtii (strain DSM 44385 / JCM 11950 / CIP 105744 / CCUG 35717).